A 967-amino-acid polypeptide reads, in one-letter code: Probable serine/threonine-protein kinase DDB_G0290621 (967 aa).

Disordered regions lie at residues 65-122 (EDSD…KEKE), 215-251 (SSLS…SSSS), and 287-326 (QQQL…SPRT). Acidic residues predominate over residues 66-94 (DSDEDDDDEEDEEDEEDSDEEEDDDVVED). The span at 95–122 (DNTKDIGKSRDSDKSIKGKEKGKEKEKE) shows a compositional bias: basic and acidic residues. Residues 297 to 326 (QQQQQQQQQQQQQNNSMLQQSNNNNISPRT) are compositionally biased toward low complexity. The region spanning 345–610 (FNDSNKIGEG…EIRSRLSEII (266 aa)) is the Protein kinase domain. Residues 351-359 (IGEGGQCSI) and K368 contribute to the ATP site. Residue D467 is the Proton acceptor of the active site. Disordered regions lie at residues 634–667 (DDSL…NNNN), 700–752 (STSN…NNNI), and 862–882 (TSSS…NPSN). Over residues 639–666 (NNNNNNNQNNNNQNNNNNNNNNNNNNNN) the composition is skewed to low complexity. Low complexity predominate over residues 863-882 (SSSSNKNNNNNNNDNNNPSN).

Belongs to the protein kinase superfamily. TKL Ser/Thr protein kinase family.

The enzyme catalyses L-seryl-[protein] + ATP = O-phospho-L-seryl-[protein] + ADP + H(+). The catalysed reaction is L-threonyl-[protein] + ATP = O-phospho-L-threonyl-[protein] + ADP + H(+). This Dictyostelium discoideum (Social amoeba) protein is Probable serine/threonine-protein kinase DDB_G0290621.